A 221-amino-acid chain; its full sequence is Eukaryotic translation initiation factor 3 subunit K (221 aa).

The PCI domain maps to tyrosine 46–lysine 207.

Belongs to the eIF-3 subunit K family. In terms of assembly, component of the eukaryotic translation initiation factor 3 (eIF-3) complex.

Its subcellular location is the cytoplasm. In terms of biological role, component of the eukaryotic translation initiation factor 3 (eIF-3) complex, which is involved in protein synthesis of a specialized repertoire of mRNAs and, together with other initiation factors, stimulates binding of mRNA and methionyl-tRNAi to the 40S ribosome. The eIF-3 complex specifically targets and initiates translation of a subset of mRNAs involved in cell proliferation. The polypeptide is Eukaryotic translation initiation factor 3 subunit K (Culex quinquefasciatus (Southern house mosquito)).